The chain runs to 101 residues: uncharacterized protein (101 aa).

The signal sequence occupies residues 1–21 (MKLSTCCAALLLALASPAVLA). The span at 79-94 (RTTSGNVSAPAQSSQD) shows a compositional bias: polar residues. The tract at residues 79-101 (RTTSGNVSAPAQSSQDGAPAEPQ) is disordered.

This is an uncharacterized protein from Escherichia coli (strain K12).